The following is a 293-amino-acid chain: Probable porphobilinogen deaminase (293 aa).

Position 233 is an S-(dipyrrolylmethanemethyl)cysteine (Cys233).

The protein belongs to the HMBS family. The cofactor is dipyrromethane.

It carries out the reaction 4 porphobilinogen + H2O = hydroxymethylbilane + 4 NH4(+). It functions in the pathway porphyrin-containing compound metabolism; protoporphyrin-IX biosynthesis; coproporphyrinogen-III from 5-aminolevulinate: step 2/4. Tetrapolymerization of the monopyrrole PBG into the hydroxymethylbilane pre-uroporphyrinogen in several discrete steps. The chain is Probable porphobilinogen deaminase from Saccharolobus islandicus (strain L.S.2.15 / Lassen #1) (Sulfolobus islandicus).